Reading from the N-terminus, the 152-residue chain is Putative pseudoazurin (152 aa).

The first 23 residues, Met-1 to Ala-23, serve as a signal peptide directing secretion. Residues Val-28–Gly-116 enclose the Plastocyanin-like domain. Positions 63, 101, 104, and 109 each coordinate Cu cation.

The cofactor is Cu cation.

It is found in the periplasm. In terms of biological role, this soluble electron transfer copper protein is required for the inactivation of copper-containing nitrite reductase in the presence of oxygen. The protein is Putative pseudoazurin (azu) of Rhizobium leguminosarum bv. viciae.